Reading from the N-terminus, the 563-residue chain is MDYKVKVAQVIEQAVDGKLSQEDILAKIEKPKTLNLGDYAFPAFVLSKVLRKAPQMIASELVEKIDQTGFEKVEAVGPYVNFFLDKKEFSKDILSEVLSEGSAYGNQDLGHGGNVPIDMSSPNIAKPMSMGHLRSTVIGNSLALLLEKVNYKPIKIDHLGDWGTQFGKLIVAYKLWGSEEEVKADPINNLLKYYVRFHEEDVNNPELDEEAREWFKKLEDGDEEALKLWKWFREESLKKFTEVYDRLNITFDSYNGEAFYNDKMDEITDLLQEKGLLKESQGAEIVDLEKYDLNPALIRKTDGATLYITRDLAAALYRYRTYDFVQSLYVVGQEQTNHFKQLKAVLKEMGYDWSDDIHHIPFGLITSGGKKLSTRSGRVILLEEVLDDAVKLANKQIEEKNPNLADKEEVAEAVGVGAVVFHDLKNERINSFDFNLDEVVRFEGETGPYVQYSHARAMSILRKAGDLELDSDNLEISDPEAWQTLRLLAAFPETVKKAVSEYEPSVVAKYAIHLAKAFNKYYAHSRILNDDAEKNARLALVQSVATTLKESLRLLGVKAPNEM.

The short motif at 122 to 132 (PNIAKPMSMGH) is the 'HIGH' region element.

The protein belongs to the class-I aminoacyl-tRNA synthetase family. In terms of assembly, monomer.

It is found in the cytoplasm. The catalysed reaction is tRNA(Arg) + L-arginine + ATP = L-arginyl-tRNA(Arg) + AMP + diphosphate. The protein is Arginine--tRNA ligase of Ligilactobacillus salivarius (strain UCC118) (Lactobacillus salivarius).